We begin with the raw amino-acid sequence, 177 residues long: MMRRVEDLLKDKIPYGILSNTHGLNGDLKLYLFSNMPELVEKITEAVAYNESQKKFVIVKFSKVRKASDYFIVHLTGIDTISEAEKLKGFIIYLDKSFFPKSKDGEYYFFEILNAEVYDNAGEFIGIVEDIIETGNNDVIVVKKEKEEVLIPVIERYILKIDKEAKKIIVNMPEWLE.

The region spanning 104–176 is the PRC barrel domain; the sequence is DGEYYFFEIL…KIIVNMPEWL (73 aa).

This sequence belongs to the RimM family. In terms of assembly, binds ribosomal protein uS19.

Its subcellular location is the cytoplasm. Functionally, an accessory protein needed during the final step in the assembly of 30S ribosomal subunit, possibly for assembly of the head region. Essential for efficient processing of 16S rRNA. May be needed both before and after RbfA during the maturation of 16S rRNA. It has affinity for free ribosomal 30S subunits but not for 70S ribosomes. In Fervidobacterium nodosum (strain ATCC 35602 / DSM 5306 / Rt17-B1), this protein is Ribosome maturation factor RimM.